A 598-amino-acid polypeptide reads, in one-letter code: Aspartate--tRNA(Asp/Asn) ligase (598 aa).

E177 contacts L-aspartate. The aspartate stretch occupies residues 201–204 (QLFK). Residue R223 participates in L-aspartate binding. ATP contacts are provided by residues 223–225 (RDE) and Q232. H456 serves as a coordination point for L-aspartate. Residue E493 participates in ATP binding. R500 is an L-aspartate binding site. 545–548 (GVDR) provides a ligand contact to ATP.

It belongs to the class-II aminoacyl-tRNA synthetase family. Type 1 subfamily. As to quaternary structure, homodimer.

Its subcellular location is the cytoplasm. It carries out the reaction tRNA(Asx) + L-aspartate + ATP = L-aspartyl-tRNA(Asx) + AMP + diphosphate. Aspartyl-tRNA synthetase with relaxed tRNA specificity since it is able to aspartylate not only its cognate tRNA(Asp) but also tRNA(Asn). Reaction proceeds in two steps: L-aspartate is first activated by ATP to form Asp-AMP and then transferred to the acceptor end of tRNA(Asp/Asn). The sequence is that of Aspartate--tRNA(Asp/Asn) ligase from Prochlorococcus marinus subsp. pastoris (strain CCMP1986 / NIES-2087 / MED4).